A 314-amino-acid polypeptide reads, in one-letter code: Coiled-coil domain-containing protein 92 (314 aa).

2 coiled-coil regions span residues Met-1–Thr-27 and Asp-59–Tyr-113. Disordered stretches follow at residues Leu-153–Leu-193 and Ala-251–Val-314. The span at Pro-176–Arg-186 shows a compositional bias: basic and acidic residues. Ser-192 carries the post-translational modification Phosphoserine. Basic residues predominate over residues Lys-266–His-280.

Interacts with CEP164. Post-translationally, phosphorylated at Ser-192 by TTBK2.

It localises to the cytoplasm. It is found in the cytoskeleton. Its subcellular location is the microtubule organizing center. The protein resides in the centrosome. The protein localises to the centriole. Interferon-stimulated protein that plays a role in innate immunity. This Mus musculus (Mouse) protein is Coiled-coil domain-containing protein 92 (Ccdc92).